Reading from the N-terminus, the 106-residue chain is ATP-dependent Clp protease adapter protein ClpS (106 aa).

It belongs to the ClpS family. In terms of assembly, binds to the N-terminal domain of the chaperone ClpA.

In terms of biological role, involved in the modulation of the specificity of the ClpAP-mediated ATP-dependent protein degradation. This chain is ATP-dependent Clp protease adapter protein ClpS, found in Edwardsiella ictaluri (strain 93-146).